The primary structure comprises 585 residues: Aspartate--tRNA ligase (585 aa).

Glu169 contributes to the L-aspartate binding site. Residues 193–196 (QLFK) are aspartate. Arg215 contributes to the L-aspartate binding site. Residues 215–217 (RDE) and Gln224 each bind ATP. Residue His443 participates in L-aspartate binding. Glu478 provides a ligand contact to ATP. Arg485 serves as a coordination point for L-aspartate. Position 530–533 (530–533 (GLDR)) interacts with ATP.

The protein belongs to the class-II aminoacyl-tRNA synthetase family. Type 1 subfamily. In terms of assembly, homodimer.

Its subcellular location is the cytoplasm. It catalyses the reaction tRNA(Asp) + L-aspartate + ATP = L-aspartyl-tRNA(Asp) + AMP + diphosphate. Functionally, catalyzes the attachment of L-aspartate to tRNA(Asp) in a two-step reaction: L-aspartate is first activated by ATP to form Asp-AMP and then transferred to the acceptor end of tRNA(Asp). The protein is Aspartate--tRNA ligase of Pseudothermotoga lettingae (strain ATCC BAA-301 / DSM 14385 / NBRC 107922 / TMO) (Thermotoga lettingae).